The following is a 333-amino-acid chain: Na(+)-translocating ferredoxin:NAD(+) oxidoreductase complex subunit B (333 aa).

The hydrophobic stretch occupies residues M1 to A27. Residues Y33–M92 enclose the 4Fe-4S domain. Residues C50, C53, C58, C75, C138, C142, C148, C152, C172, C175, C178, C182, C217, C220, C223, C227, C246, C249, C252, C256, C279, C282, C285, C289, C310, C313, C316, and C320 each coordinate [4Fe-4S] cluster. 6 4Fe-4S ferredoxin-type domains span residues R126–D162, G163–E192, K207–N237, A239–E266, S270–K299, and P301–N330.

This sequence belongs to the 4Fe4S bacterial-type ferredoxin family. RnfB subfamily. The complex is composed of six subunits: RnfA, RnfB, RnfC, RnfD, RnfE and RnfG. [4Fe-4S] cluster serves as cofactor.

It localises to the cell membrane. It carries out the reaction 2 reduced [2Fe-2S]-[ferredoxin] + Na(+)(in) + NAD(+) + H(+) = 2 oxidized [2Fe-2S]-[ferredoxin] + Na(+)(out) + NADH. Functionally, part of a membrane-bound complex that couples electron transfer with translocation of ions across the membrane. Couples electron transfer from reduced ferredoxin to NAD(+) with electrogenic movement of Na(+) out of the cell. Involved in caffeate respiration. In Acetobacterium woodii (strain ATCC 29683 / DSM 1030 / JCM 2381 / KCTC 1655 / WB1), this protein is Na(+)-translocating ferredoxin:NAD(+) oxidoreductase complex subunit B.